The chain runs to 380 residues: MAPTIRKSHPLLKIINGSFIDLPTPANISAWWNFGSLLGVCLIAQIATGLFLAMHYTADTSLAFSSVAHICRDVNNGWLLRNLHANGASFFFICIYFHIGRGLYYGSYLYKETWNIGVILLFLVMATAFVGYVLPWGQMSFWGATVITNLLSAAPYIGPDLVQWIWGGFSVDNSTLTRFFTFHFILPFIIAAASMIHLLFLHQTGSSNPTGLNSNLDKVSFHPYFSYKDLLGFVIMLGALASLSTFAPNLLGDPDNFTPANPLVTPPHIKPEWYFLFAYAILRSIPNKLGGVLALLLSIMVLFLMPIIHTSKLRSLMFRPIAKTFFWALIANTAILTWIGGQPVEDPFITIGQIASGLYFLIFVLLIPSLGLLENKLLKI.

A run of 4 helical transmembrane segments spans residues 34-54 (FGSLLGVCLIAQIATGLFLAM), 78-99 (WLLRNLHANGASFFFICIYFHI), 114-134 (WNIGVILLFLVMATAFVGYVL), and 179-199 (FFTFHFILPFIIAAASMIHLL). Heme b contacts are provided by His84 and His98. Heme b contacts are provided by His183 and His197. His202 is a binding site for a ubiquinone. Helical transmembrane passes span 227–247 (YKDLLGFVIMLGALASLSTFA), 289–309 (LGGVLALLLSIMVLFLMPIIH), 321–341 (IAKTFFWALIANTAILTWIGG), and 348–368 (FITIGQIASGLYFLIFVLLIP).

The protein belongs to the cytochrome b family. In terms of assembly, the cytochrome bc1 complex contains 3 respiratory subunits (MT-CYB, CYC1 and UQCRFS1), 2 core proteins (UQCRC1 and UQCRC2) and probably 6 low-molecular weight proteins. Heme b is required as a cofactor.

It localises to the mitochondrion inner membrane. Its function is as follows. Component of the ubiquinol-cytochrome c reductase complex (complex III or cytochrome b-c1 complex) that is part of the mitochondrial respiratory chain. The b-c1 complex mediates electron transfer from ubiquinol to cytochrome c. Contributes to the generation of a proton gradient across the mitochondrial membrane that is then used for ATP synthesis. The chain is Cytochrome b (mt-cyb) from Pelophylax nigromaculatus (Black-spotted frog).